Reading from the N-terminus, the 366-residue chain is Phospho-N-acetylmuramoyl-pentapeptide-transferase (366 aa).

10 helical membrane passes run 3–23 (QIFI…PVLI), 55–75 (IAIL…GLVF), 80–100 (PGVS…VGFA), 118–138 (AKLI…LQFP), 161–181 (IAVG…NIVI), 197–217 (LASG…FWQF), 235–255 (PLDL…FLWW), 262–282 (IFMG…LSIT), 287–307 (LLMI…VIQV), and 341–361 (FWLL…GEWL).

Belongs to the glycosyltransferase 4 family. MraY subfamily. Requires Mg(2+) as cofactor.

Its subcellular location is the cell membrane. It catalyses the reaction UDP-N-acetyl-alpha-D-muramoyl-L-alanyl-gamma-D-glutamyl-meso-2,6-diaminopimeloyl-D-alanyl-D-alanine + di-trans,octa-cis-undecaprenyl phosphate = di-trans,octa-cis-undecaprenyl diphospho-N-acetyl-alpha-D-muramoyl-L-alanyl-D-glutamyl-meso-2,6-diaminopimeloyl-D-alanyl-D-alanine + UMP. Its pathway is cell wall biogenesis; peptidoglycan biosynthesis. Functionally, catalyzes the initial step of the lipid cycle reactions in the biosynthesis of the cell wall peptidoglycan: transfers peptidoglycan precursor phospho-MurNAc-pentapeptide from UDP-MurNAc-pentapeptide onto the lipid carrier undecaprenyl phosphate, yielding undecaprenyl-pyrophosphoryl-MurNAc-pentapeptide, known as lipid I. This is Phospho-N-acetylmuramoyl-pentapeptide-transferase from Corynebacterium urealyticum (strain ATCC 43042 / DSM 7109).